Consider the following 172-residue polypeptide: 3-hydroxydecanoyl-[acyl-carrier-protein] dehydratase (172 aa).

The active site involves histidine 71.

This sequence belongs to the thioester dehydratase family. FabA subfamily. In terms of assembly, homodimer.

It is found in the cytoplasm. It carries out the reaction a (3R)-hydroxyacyl-[ACP] = a (2E)-enoyl-[ACP] + H2O. It catalyses the reaction (3R)-hydroxydecanoyl-[ACP] = (2E)-decenoyl-[ACP] + H2O. The enzyme catalyses (2E)-decenoyl-[ACP] = (3Z)-decenoyl-[ACP]. The protein operates within lipid metabolism; fatty acid biosynthesis. Necessary for the introduction of cis unsaturation into fatty acids. Catalyzes the dehydration of (3R)-3-hydroxydecanoyl-ACP to E-(2)-decenoyl-ACP and then its isomerization to Z-(3)-decenoyl-ACP. Can catalyze the dehydratase reaction for beta-hydroxyacyl-ACPs with saturated chain lengths up to 16:0, being most active on intermediate chain length. The sequence is that of 3-hydroxydecanoyl-[acyl-carrier-protein] dehydratase from Aliivibrio fischeri (strain ATCC 700601 / ES114) (Vibrio fischeri).